The primary structure comprises 284 residues: 4-diphosphocytidyl-2-C-methyl-D-erythritol kinase (284 aa).

Residue K14 is part of the active site. 98–108 (PMGGGLGGGSS) is a binding site for ATP. Residue D140 is part of the active site.

This sequence belongs to the GHMP kinase family. IspE subfamily.

It catalyses the reaction 4-CDP-2-C-methyl-D-erythritol + ATP = 4-CDP-2-C-methyl-D-erythritol 2-phosphate + ADP + H(+). Its pathway is isoprenoid biosynthesis; isopentenyl diphosphate biosynthesis via DXP pathway; isopentenyl diphosphate from 1-deoxy-D-xylulose 5-phosphate: step 3/6. Functionally, catalyzes the phosphorylation of the position 2 hydroxy group of 4-diphosphocytidyl-2C-methyl-D-erythritol. This is 4-diphosphocytidyl-2-C-methyl-D-erythritol kinase from Shewanella sp. (strain MR-4).